A 640-amino-acid polypeptide reads, in one-letter code: Threonine--tRNA ligase (640 aa).

One can recognise a TGS domain in the interval 1–61 (MLVVTLPDGS…DKDSQLAIIT (61 aa)). Residues 242-533 (DHRRLGKQLD…LIENHTGNMP (292 aa)) form a catalytic region. Residues Cys333, His384, and His510 each contribute to the Zn(2+) site.

The protein belongs to the class-II aminoacyl-tRNA synthetase family. As to quaternary structure, homodimer. It depends on Zn(2+) as a cofactor.

The protein resides in the cytoplasm. It carries out the reaction tRNA(Thr) + L-threonine + ATP = L-threonyl-tRNA(Thr) + AMP + diphosphate + H(+). Functionally, catalyzes the attachment of threonine to tRNA(Thr) in a two-step reaction: L-threonine is first activated by ATP to form Thr-AMP and then transferred to the acceptor end of tRNA(Thr). Also edits incorrectly charged L-seryl-tRNA(Thr). This chain is Threonine--tRNA ligase, found in Polynucleobacter necessarius subsp. necessarius (strain STIR1).